A 107-amino-acid polypeptide reads, in one-letter code: Nucleoid-associated protein Atu0095 (107 aa).

The interval 81 to 107 is disordered; that stretch reads KGEAQAQEKMADLTAGLPLPPGMKLPF. Over residues 98–107 the composition is skewed to pro residues; it reads PLPPGMKLPF.

The protein belongs to the YbaB/EbfC family. As to quaternary structure, homodimer.

It is found in the cytoplasm. The protein resides in the nucleoid. Functionally, binds to DNA and alters its conformation. May be involved in regulation of gene expression, nucleoid organization and DNA protection. This chain is Nucleoid-associated protein Atu0095, found in Agrobacterium fabrum (strain C58 / ATCC 33970) (Agrobacterium tumefaciens (strain C58)).